The chain runs to 279 residues: Large ribosomal subunit protein uL2 (279 aa).

Disordered stretches follow at residues 32-53 (SLLR…TTRH) and 225-279 (AMNP…KKRK). The span at 253-268 (KEGRTRHINKPSDKLI) shows a compositional bias: basic and acidic residues. Residues 269–279 (VRRRNAGKKRK) are compositionally biased toward basic residues.

This sequence belongs to the universal ribosomal protein uL2 family. As to quaternary structure, part of the 50S ribosomal subunit. Forms a bridge to the 30S subunit in the 70S ribosome.

Its function is as follows. One of the primary rRNA binding proteins. Required for association of the 30S and 50S subunits to form the 70S ribosome, for tRNA binding and peptide bond formation. It has been suggested to have peptidyltransferase activity; this is somewhat controversial. Makes several contacts with the 16S rRNA in the 70S ribosome. This chain is Large ribosomal subunit protein uL2, found in Clavibacter michiganensis subsp. michiganensis (strain NCPPB 382).